The primary structure comprises 828 residues: Translation initiation factor IF-2 (828 aa).

Disordered regions lie at residues 48-76 and 112-137; these read SYSG…SEEF and ASQE…EPKI. Over residues 49 to 58 the composition is skewed to polar residues; sequence YSGSTTTLSL. Residues 65–74 are compositionally biased toward low complexity; sequence LETGSSSGSE. Acidic residues predominate over residues 116–126; the sequence is DPIEVEQEESS. Residues 127 to 137 are compositionally biased toward basic and acidic residues; sequence DTNKVKEEPKI. Residues 326 to 496 enclose the tr-type G domain; that stretch reads SRAPVVTVMG…LLIAEMQNLK (171 aa). The G1 stretch occupies residues 335-342; that stretch reads GHVDHGKT. A GTP-binding site is contributed by 335 to 342; it reads GHVDHGKT. The interval 360–364 is G2; the sequence is GITQH. The tract at residues 382–385 is G3; it reads DTPG. GTP contacts are provided by residues 382 to 386 and 436 to 439; these read DTPGH and NKID. Residues 436–439 are G4; sequence NKID. Positions 472–474 are G5; the sequence is SAL.

The protein belongs to the TRAFAC class translation factor GTPase superfamily. Classic translation factor GTPase family. IF-2 subfamily.

Its subcellular location is the cytoplasm. One of the essential components for the initiation of protein synthesis. Protects formylmethionyl-tRNA from spontaneous hydrolysis and promotes its binding to the 30S ribosomal subunits. Also involved in the hydrolysis of GTP during the formation of the 70S ribosomal complex. The protein is Translation initiation factor IF-2 of Rickettsia bellii (strain RML369-C).